The primary structure comprises 389 residues: MEMKDFIFTSESVSEGHPDKVADQVSDAILDAILTQDPKSRVACETMVTTGMAVIAGEITTNAIIDYPKIVRETIREIGYNDSAMGFDWETCAVLTSIDKQSPDIAQGVTEGEGMFKEQGAGDQGLMFGFACNETPELMPMSILLAHKLVSRLADVRKAGVLDFLRPDSKSQVSIQYIDDKPVHVDTVVISSQHSPEVSYEMIKEGIIEEVVKKIIPANLMDSKTKFLINPTGRFVIGGPMGDCGLTGRKIIVDSYGGHGAHGGGAFSGKDPSKVDRSAAYMGRYVAKNLVASGVCERCEVQVAYAIGVAEPVSVMVDCNGTGKIPSKRISEIVREVFDMRPRAIIEQLDLLRPIYRKTAAYGHFGRELPEFTWERTDKAAIIREKAGL.

Residue His17 coordinates ATP. Asp19 lines the Mg(2+) pocket. Glu45 contributes to the K(+) binding site. Glu58 and Gln101 together coordinate L-methionine. Residues 101–111 (QSPDIAQGVTE) form a flexible loop region. Residues 168-170 (DSK), 234-235 (RF), Asp243, 249-250 (RK), Ala266, and Lys270 each bind ATP. Position 243 (Asp243) interacts with L-methionine. Residue Lys274 participates in L-methionine binding.

It belongs to the AdoMet synthase family. In terms of assembly, homotetramer; dimer of dimers. Requires Mg(2+) as cofactor. The cofactor is K(+).

Its subcellular location is the cytoplasm. It carries out the reaction L-methionine + ATP + H2O = S-adenosyl-L-methionine + phosphate + diphosphate. The protein operates within amino-acid biosynthesis; S-adenosyl-L-methionine biosynthesis; S-adenosyl-L-methionine from L-methionine: step 1/1. Its function is as follows. Catalyzes the formation of S-adenosylmethionine (AdoMet) from methionine and ATP. The overall synthetic reaction is composed of two sequential steps, AdoMet formation and the subsequent tripolyphosphate hydrolysis which occurs prior to release of AdoMet from the enzyme. The polypeptide is S-adenosylmethionine synthase (Geobacter sp. (strain M21)).